The chain runs to 339 residues: uncharacterized protein (339 aa).

Ile54, Lys78, Asp101, Asn128, Tyr213, and Lys217 together coordinate NADP(+). The active-site Proton donor is Tyr213. Catalysis depends on Lys217, which acts as the Lowers pKa of active site Tyr.

The protein belongs to the short-chain dehydrogenases/reductases (SDR) family.

This is an uncharacterized protein from Schizosaccharomyces pombe (strain 972 / ATCC 24843) (Fission yeast).